The following is a 248-amino-acid chain: Probable transcriptional regulatory protein Acid_5948 (248 aa).

Belongs to the TACO1 family.

It is found in the cytoplasm. The chain is Probable transcriptional regulatory protein Acid_5948 from Solibacter usitatus (strain Ellin6076).